Consider the following 1585-residue polypeptide: uncharacterized protein (1585 aa).

Residues 12–59 (DKISRKLRMIQGNAERLKRAANGPLIFEAEDRTERVMRQIDRSANRLT) adopt a coiled-coil conformation. 2 disordered regions span residues 586-627 (PKRT…SLPR) and 645-692 (IRRR…NPTR). Positions 618 to 627 (TATGPTSLPR) are enriched in polar residues. Residues 645–655 (IRRRRGKRVLG) are compositionally biased toward basic residues. Over residues 661-672 (NRMNPSDSSIAV) the composition is skewed to polar residues. Residues S970 and S972 each carry the phosphoserine modification.

It to B.subtilis XkdO.

This is an uncharacterized protein from Bacillus subtilis (strain 168).